The primary structure comprises 333 residues: Ribosomal RNA small subunit methyltransferase H (333 aa).

S-adenosyl-L-methionine-binding positions include G36–Y38, D54, F81, D102, and Q109.

Belongs to the methyltransferase superfamily. RsmH family.

The protein localises to the cytoplasm. It catalyses the reaction cytidine(1402) in 16S rRNA + S-adenosyl-L-methionine = N(4)-methylcytidine(1402) in 16S rRNA + S-adenosyl-L-homocysteine + H(+). Functionally, specifically methylates the N4 position of cytidine in position 1402 (C1402) of 16S rRNA. This chain is Ribosomal RNA small subunit methyltransferase H, found in Afipia carboxidovorans (strain ATCC 49405 / DSM 1227 / KCTC 32145 / OM5) (Oligotropha carboxidovorans).